The chain runs to 292 residues: Peroxisomal 2,4-dienoyl-CoA reductase SPS19 [(3E)-enoyl-CoA-producing] (292 aa).

Residues Ile-36, Asp-85, and Lys-145 each coordinate NADP(+). Ser-162 (proton donor) is an active-site residue. Lys-180 provides a ligand contact to NADP(+). Lys-180 serves as the catalytic Lowers pKa of active site Tyr. Residue Lys-188 forms a Glycyl lysine isopeptide (Lys-Gly) (interchain with G-Cter in ubiquitin) linkage. Ile-209 is an NADP(+) binding site. The Microbody targeting signal motif lies at 290–292 (SKL).

Belongs to the short-chain dehydrogenases/reductases (SDR) family. In terms of assembly, homodimer.

It localises to the peroxisome. The enzyme catalyses a (2E,4Z)-dienoyl-CoA + NADPH + H(+) = a 4,5-saturated-(3E)-enoyl-CoA + NADP(+). It catalyses the reaction a (2E,4E)-dienoyl-CoA + NADPH + H(+) = a 4,5-saturated-(3E)-enoyl-CoA + NADP(+). In terms of biological role, auxiliary enzyme of beta-oxidation. Participates in the degradation of unsaturated fatty enoyl-CoA esters having double bonds in both even- and odd-numbered positions in peroxisome. Catalyzes the NADP-dependent reduction of 2,4-dienoyl-CoA to yield trans-3-enoyl-CoA. Dispensable for growth and sporulation on solid acetate and oleate media, but is essential for these processes to occur on petroselineate. This Saccharomyces cerevisiae (strain ATCC 204508 / S288c) (Baker's yeast) protein is Peroxisomal 2,4-dienoyl-CoA reductase SPS19 [(3E)-enoyl-CoA-producing] (SPS19).